Consider the following 212-residue polypeptide: Adenylate kinase (212 aa).

10–15 (GAGKGT) is an ATP binding site. The interval 30 to 59 (STGDMFRAAMANQTEMGRLAKSYIDKGELV) is NMP. Residues Thr-31, Arg-36, 57-59 (ELV), 86-89 (GYPR), and Gln-93 each bind AMP. Residues 127 to 159 (GRIINRKTGETFHKVFNPPVDYKEEDYYQREDD) are LID. Residues Arg-128 and 137–138 (TF) each bind ATP. 2 residues coordinate AMP: Arg-156 and Arg-167. Gln-195 contributes to the ATP binding site.

In terms of assembly, monomer.

It localises to the cytoplasm. The enzyme catalyses AMP + ATP = 2 ADP. Its pathway is purine metabolism; AMP biosynthesis via salvage pathway; AMP from ADP: step 1/1. Its function is as follows. Catalyzes the reversible transfer of the terminal phosphate group between ATP and AMP. Plays an important role in cellular energy homeostasis and in adenine nucleotide metabolism. In Streptococcus pyogenes serotype M6 (strain ATCC BAA-946 / MGAS10394), this protein is Adenylate kinase.